A 133-amino-acid polypeptide reads, in one-letter code: Ycf54-like protein (133 aa).

The protein belongs to the ycf54 family.

This chain is Ycf54-like protein, found in Synechocystis sp. (strain ATCC 27184 / PCC 6803 / Kazusa).